Reading from the N-terminus, the 431-residue chain is Protein SHQ1 homolog (431 aa).

The protein belongs to the SHQ1 family.

Its function is as follows. Required for the quantitative accumulation of H/ACA ribonucleoproteins (RNPs). The chain is Protein SHQ1 homolog from Caenorhabditis elegans.